A 488-amino-acid chain; its full sequence is 5'-3' exonuclease PLD3 (488 aa).

At 1-38 the chain is on the cytoplasmic side; that stretch reads MKPKLMYQELKVPVEEPAGELPMNEIEAWKAAEKKARW. Residues 39 to 59 form a helical; Signal-anchor for type II membrane protein membrane-spanning segment; the sequence is VLLVLILAVVGFGALMTQLFL. The Lumenal portion of the chain corresponds to 60–488; that stretch reads WEYGDLHLFG…DSVGNACRLL (429 aa). Cystine bridges form between cysteine 77–cysteine 237 and cysteine 81–cysteine 235. 2 N-linked (GlcNAc...) asparagine glycosylation sites follow: asparagine 97 and asparagine 132. In terms of domain architecture, PLD phosphodiesterase 1 spans 194–221; it reads THGVLHTKFWVVDQTHFYLGSANMDWRS. Active-site residues include histidine 199, lysine 201, and aspartate 206. Histidine 199 serves as the catalytic Proton donor. Positions 199 and 201 each coordinate phosphate. Phosphate is bound at residue asparagine 216. Residues asparagine 234, asparagine 282, and asparagine 385 are each glycosylated (N-linked (GlcNAc...) asparagine). Cysteine 364 and cysteine 485 form a disulfide bridge. One can recognise a PLD phosphodiesterase 2 domain in the interval 409–435; it reads YARVNHNKYMVTERTTYIGTSNWSGSY. Histidine 414 is a phosphate binding site. Catalysis depends on histidine 414, which acts as the Nucleophile. Phenylalanine 436 contributes to the Mg(2+) binding site.

This sequence belongs to the phospholipase D family. As to quaternary structure, homodimer. Interacts with APP. Post-translationally, N-glycosylated. In terms of processing, proteolytically processed to a soluble form that is stable within endosomes and lysosomes. During transport through the secretory pathway becomes proteolysed by cysteine proteases, thereby releasing a stable soluble lysosomal lumenal polypeptide, whereas the transmembrane-bound fragment is rapidly degraded. Its transport route to lysosomes involves ubiquitination and the ESCRT complex. Ubiquitinated. Ubiquitination mediates sorting into lysosomes.

The protein localises to the endoplasmic reticulum membrane. It is found in the lysosome lumen. Its subcellular location is the early endosome membrane. It localises to the late endosome membrane. The protein resides in the golgi apparatus membrane. The protein localises to the endosome membrane. It carries out the reaction Exonucleolytic cleavage in the 5'- to 3'-direction to yield nucleoside 3'-phosphates.. The catalysed reaction is a 5'-end 5'-dephospho-ribonucleotidyl-ribonucleotide-RNA + H2O = a ribonucleoside 3'-phosphate + a 5'-end dephospho-ribonucleoside-RNA + H(+). It catalyses the reaction a ribonucleoside 3'-phosphate-2'-3'-cyclophospho-GMP + H2O = a ribonucleoside 3'-phosphate + 2',3'-cyclophospho-GMP + H(+). The enzyme catalyses a 5'-end 5'-dephospho-2'-deoxyribonucleotidyl-2'-deoxyribonucleotide in single-stranded DNA + H2O = a 5'-end dephospho-2'-deoxyribonucleoside in single-stranded DNA + a 2'-deoxyribonucleoside 3'-phosphate + H(+). It carries out the reaction a 5'-end 5'-phospho-2'-deoxyribonucleotide in single-stranded DNA + H2O = a 5'-end 5'-dephospho-2'-deoxyribonucleotide in single-stranded DNA + phosphate. The catalysed reaction is a 3-lyso-sn-glycero-1-phospho-(3'-acyl-1'-sn-glycerol) + a 1-acyl-sn-glycerol = a 3-acyl-sn-glycero-1-phospho-(3'-acyl-1'-sn-glycerol) + glycerol. It catalyses the reaction 3-lyso-sn-glycero-1-phospho-(3'-(9Z-octadecenoyl)-1'-sn-glycerol) + 1-(9Z-octadecenoyl)-sn-glycerol = 3-(9Z-octadecenoyl)-sn-glycero-1-phospho-(3'-(9Z-octadecenoyl)-1'-sn-glycerol) + glycerol. 5'-&gt;3' exonuclease that hydrolyzes the phosphodiester bond of single-stranded DNA (ssDNA) and RNA molecules to form nucleoside 3'-monophosphates and 5'-end 5'-hydroxy deoxyribonucleotide/ribonucleotide fragments. Partially redundant with PLD4, can cleave all four nucleotides displaying higher efficiency for ssDNA and RNA fragments initiated with uridine and guanosine residues and lower efficiency for cytidine-initiated substrates. As a result, it does not always degrade polynucleotides to the single nucleotide level, it can stall at specific sites sparing certain fragments from exonucleolytic degradation. Processes self and pathogenic ssDNA and RNA molecules that reach the endolysosomal compartment via phagocytosis or autophagy and may serve as 'danger' signals for recognition by innate immune receptors such as toll-like receptors (TLRs). Degrades mitochondrial CpG-rich ssDNA fragments to prevent TLR9 activation and autoinflammatory response, but it can cleave viral RNA to generate ligands for TLR7 activation and initiate antiviral immune responses. In plasmacytoid dendritic cells, it cooperates with endonuclease RNASET2 to release 2',3'-cyclic guanosine monophosphate (2',3'-cGMP), a potent stimulatory ligand for TLR7. Produces 2',3'-cGMPs and cytidine-rich RNA fragments that occupy TLR7 ligand-binding pockets and trigger a signaling-competent state. Can exert polynucleotide phosphatase activity toward 5'-phosphorylated ssDNA substrates although at a slow rate. Transphosphatidylase that catalyzes the exchange with R to S stereo-inversion of the glycerol moiety between (S,R)-lysophosphatidylglycerol (LPG) and monoacylglycerol (MAG) substrates to yield (S,S)-bis(monoacylglycero)phosphate (BMP). Can synthesize a variety of (S,S)-BMPs representing the main phospholipid constituent of lysosomal intralumenal vesicle (ILV) membranes that bind acid hydrolases for lipid degradation. Regulates the homeostasis and interorganellar communication of the endolysosomal system with an overall impact on cellular removal of dysfunctional organelles via autophagy as well as proper protein and lipid turnover. May play a role in myotube formation in response to ER stress. In Rattus norvegicus (Rat), this protein is 5'-3' exonuclease PLD3 (Pld3).